A 515-amino-acid polypeptide reads, in one-letter code: Cytochrome P450 1A2 (515 aa).

A glycan (O-linked (GlcNAc) serine) is linked at S69. F226 is a substrate binding site. Residue C458 participates in heme binding.

The protein belongs to the cytochrome P450 family. As to quaternary structure, interacts with PGRMC1; the interaction requires PGRMC1 homodimerization. Requires heme as cofactor.

Its subcellular location is the endoplasmic reticulum membrane. It is found in the microsome membrane. It catalyses the reaction an organic molecule + reduced [NADPH--hemoprotein reductase] + O2 = an alcohol + oxidized [NADPH--hemoprotein reductase] + H2O + H(+). The catalysed reaction is 17beta-estradiol + reduced [NADPH--hemoprotein reductase] + O2 = 2-hydroxy-17beta-estradiol + oxidized [NADPH--hemoprotein reductase] + H2O + H(+). The enzyme catalyses 17beta-estradiol + reduced [NADPH--hemoprotein reductase] + O2 = 4-hydroxy-17beta-estradiol + oxidized [NADPH--hemoprotein reductase] + H2O + H(+). It carries out the reaction estrone + reduced [NADPH--hemoprotein reductase] + O2 = 2-hydroxyestrone + oxidized [NADPH--hemoprotein reductase] + H2O + H(+). It catalyses the reaction estrone + reduced [NADPH--hemoprotein reductase] + O2 = 4-hydroxyestrone + oxidized [NADPH--hemoprotein reductase] + H2O + H(+). The catalysed reaction is cholesterol + reduced [NADPH--hemoprotein reductase] + O2 = 25-hydroxycholesterol + oxidized [NADPH--hemoprotein reductase] + H2O + H(+). The enzyme catalyses all-trans-retinol + reduced [NADPH--hemoprotein reductase] + O2 = all-trans-retinal + oxidized [NADPH--hemoprotein reductase] + 2 H2O + H(+). It carries out the reaction all-trans-retinal + reduced [NADPH--hemoprotein reductase] + O2 = all-trans-retinoate + oxidized [NADPH--hemoprotein reductase] + H2O + 2 H(+). It catalyses the reaction (5Z,8Z,11Z,14Z)-eicosatetraenoate + reduced [NADPH--hemoprotein reductase] + O2 = (14R,15S)-epoxy-(5Z,8Z,11Z)-eicosatrienoate + oxidized [NADPH--hemoprotein reductase] + H2O + H(+). The catalysed reaction is (5Z,8Z,11Z,14Z)-eicosatetraenoate + reduced [NADPH--hemoprotein reductase] + O2 = (14S,15R)-epoxy-(5Z,8Z,11Z)-eicosatrienoate + oxidized [NADPH--hemoprotein reductase] + H2O + H(+). The enzyme catalyses (5Z,8Z,11Z,14Z,17Z)-eicosapentaenoate + reduced [NADPH--hemoprotein reductase] + O2 = (17R,18S)-epoxy-(5Z,8Z,11Z,14Z)-eicosatetraenoate + oxidized [NADPH--hemoprotein reductase] + H2O + H(+). It carries out the reaction (4Z,7Z,10Z,13Z,16Z,19Z)-docosahexaenoate + reduced [NADPH--hemoprotein reductase] + O2 = (19R,20S)-epoxy-(4Z,7Z,10Z,13Z,16Z)-docosapentaenoate + oxidized [NADPH--hemoprotein reductase] + H2O + H(+). It catalyses the reaction (5S)-hydroperoxy-(6E,8Z,11Z,14Z)-eicosatetraenoate = 5-oxo-(6E,8Z,11Z,14Z)-eicosatetraenoate + H2O. The catalysed reaction is (12S)-hydroperoxy-(5Z,8Z,10E,14Z)-eicosatetraenoate = 12-oxo-(5Z,8Z,10E,14Z)-eicosatetraenoate + H2O. The enzyme catalyses (15S)-hydroperoxy-(5Z,8Z,11Z,13E)-eicosatetraenoate = 15-oxo-(5Z,8Z,11Z,13E)-eicosatetraenoate + H2O. It carries out the reaction (13S)-hydroperoxy-(9Z,11E)-octadecadienoate = 13-oxo-(9Z,11E)-octadecadienoate + H2O. It catalyses the reaction (5Z,8Z,11Z,14Z)-eicosatetraenoate + reduced [NADPH--hemoprotein reductase] + O2 = 13-hydroxy-(5Z,8Z,11Z,14Z)-eicosatetraenoate + oxidized [NADPH--hemoprotein reductase] + H2O + H(+). The catalysed reaction is (5Z,8Z,11Z,14Z)-eicosatetraenoate + reduced [NADPH--hemoprotein reductase] + O2 = 19-hydroxy-(5Z,8Z,11Z,14Z)-eicosatetraenoate + oxidized [NADPH--hemoprotein reductase] + H2O + H(+). The enzyme catalyses (9Z,12Z)-octadecadienoate + reduced [NADPH--hemoprotein reductase] + O2 = 11-hydroxy-(9Z,12Z)-octadecadienoate + oxidized [NADPH--hemoprotein reductase] + H2O + H(+). It functions in the pathway cofactor metabolism; retinol metabolism. The protein operates within steroid metabolism; cholesterol metabolism. Its pathway is lipid metabolism; arachidonate metabolism. Its function is as follows. A cytochrome P450 monooxygenase involved in the metabolism of various endogenous substrates, including fatty acids, steroid hormones and vitamins. Mechanistically, uses molecular oxygen inserting one oxygen atom into a substrate, and reducing the second into a water molecule, with two electrons provided by NADPH via cytochrome P450 reductase (NADPH--hemoprotein reductase). Catalyzes the hydroxylation of carbon-hydrogen bonds. Exhibits high catalytic activity for the formation of hydroxyestrogens from estrone (E1) and 17beta-estradiol (E2), namely 2-hydroxy E1 and E2. Metabolizes cholesterol toward 25-hydroxycholesterol, a physiological regulator of cellular cholesterol homeostasis. May act as a major enzyme for all-trans retinoic acid biosynthesis in the liver. Catalyzes two successive oxidative transformation of all-trans retinol to all-trans retinal and then to the active form all-trans retinoic acid. Primarily catalyzes stereoselective epoxidation of the last double bond of polyunsaturated fatty acids (PUFA), displaying a strong preference for the (R,S) stereoisomer. Catalyzes bisallylic hydroxylation and omega-1 hydroxylation of PUFA. May also participate in eicosanoids metabolism by converting hydroperoxide species into oxo metabolites (lipoxygenase-like reaction, NADPH-independent). Plays a role in the oxidative metabolism of xenobiotics. Catalyzes the N-hydroxylation of heterocyclic amines and the O-deethylation of phenacetin. Metabolizes caffeine via N3-demethylation. This Cavia porcellus (Guinea pig) protein is Cytochrome P450 1A2 (CYP1A2).